Consider the following 212-residue polypeptide: Imidazole glycerol phosphate synthase subunit HisH (212 aa).

Positions 1–212 constitute a Glutamine amidotransferase type-1 domain; it reads MLAILDYKAG…YEYCKEVSDA (212 aa). The active-site Nucleophile is C79. Catalysis depends on residues H187 and E189.

Heterodimer of HisH and HisF.

The protein resides in the cytoplasm. It carries out the reaction 5-[(5-phospho-1-deoxy-D-ribulos-1-ylimino)methylamino]-1-(5-phospho-beta-D-ribosyl)imidazole-4-carboxamide + L-glutamine = D-erythro-1-(imidazol-4-yl)glycerol 3-phosphate + 5-amino-1-(5-phospho-beta-D-ribosyl)imidazole-4-carboxamide + L-glutamate + H(+). The catalysed reaction is L-glutamine + H2O = L-glutamate + NH4(+). It participates in amino-acid biosynthesis; L-histidine biosynthesis; L-histidine from 5-phospho-alpha-D-ribose 1-diphosphate: step 5/9. Its function is as follows. IGPS catalyzes the conversion of PRFAR and glutamine to IGP, AICAR and glutamate. The HisH subunit catalyzes the hydrolysis of glutamine to glutamate and ammonia as part of the synthesis of IGP and AICAR. The resulting ammonia molecule is channeled to the active site of HisF. This Maridesulfovibrio salexigens (strain ATCC 14822 / DSM 2638 / NCIMB 8403 / VKM B-1763) (Desulfovibrio salexigens) protein is Imidazole glycerol phosphate synthase subunit HisH.